The chain runs to 265 residues: DNA repair protein RecO (265 aa).

The protein belongs to the RecO family.

Functionally, involved in DNA repair and RecF pathway recombination. This is DNA repair protein RecO from Mycobacterium marinum (strain ATCC BAA-535 / M).